Consider the following 317-residue polypeptide: Probable GTP 3',8-cyclase (317 aa).

Positions 4–223 constitute a Radical SAM core domain; it reads RYGRPLEDLR…KSEIREKHFR (220 aa). Arginine 13 contributes to the GTP binding site. Residues cysteine 20, cysteine 24, and cysteine 27 each contribute to the [4Fe-4S] cluster site. Lysine 61 serves as a coordination point for GTP. Glycine 65 contacts S-adenosyl-L-methionine. Threonine 91 lines the GTP pocket. Serine 115 serves as a coordination point for S-adenosyl-L-methionine. Position 152 (lysine 152) interacts with GTP. 2 residues coordinate [4Fe-4S] cluster: cysteine 246 and cysteine 249. 251–253 provides a ligand contact to GTP; sequence RVR. Cysteine 263 contributes to the [4Fe-4S] cluster binding site.

Belongs to the radical SAM superfamily. MoaA family. [4Fe-4S] cluster is required as a cofactor.

The catalysed reaction is GTP + AH2 + S-adenosyl-L-methionine = (8S)-3',8-cyclo-7,8-dihydroguanosine 5'-triphosphate + 5'-deoxyadenosine + L-methionine + A + H(+). The protein operates within cofactor biosynthesis; molybdopterin biosynthesis. Functionally, catalyzes the cyclization of GTP to (8S)-3',8-cyclo-7,8-dihydroguanosine 5'-triphosphate. This is Probable GTP 3',8-cyclase from Metallosphaera sedula (strain ATCC 51363 / DSM 5348 / JCM 9185 / NBRC 15509 / TH2).